Consider the following 110-residue polypeptide: Small ribosomal subunit protein bS6 (110 aa).

It belongs to the bacterial ribosomal protein bS6 family.

In terms of biological role, binds together with bS18 to 16S ribosomal RNA. The protein is Small ribosomal subunit protein bS6 (rpsF) of Aquifex aeolicus (strain VF5).